We begin with the raw amino-acid sequence, 363 residues long: Strychnine O-methyltransferase (363 aa).

Positions 204, 227, 249, 250, and 263 each coordinate S-adenosyl-L-methionine. Histidine 267 functions as the Proton acceptor in the catalytic mechanism.

This sequence belongs to the class I-like SAM-binding methyltransferase superfamily. Cation-independent O-methyltransferase family.

The catalysed reaction is 10-hydroxystrychnine + S-adenosyl-L-methionine = beta-colubrine + S-adenosyl-L-homocysteine + H(+). It carries out the reaction 11-demethylbrucine + S-adenosyl-L-methionine = brucine + S-adenosyl-L-homocysteine + H(+). Its pathway is alkaloid biosynthesis. Its function is as follows. O-methyltransferase involved in the biosynthesis of curare monoterpene indole alkaloids (MIAs), natural products such as strychnine, a neurotoxic compound used as a pesticide to control rodents, and its pharmacologically active derivatives, including brucine, used to regulate blood pressure. Curare alkaloids act as animal glycine receptor antagonists. Catalyzes the conversion of 10-OH strychnine to beta-colubrine, and of 11-deMe brucine to brucine. The protein is Strychnine O-methyltransferase of Strychnos nux-vomica (Poison nut).